The following is a 309-amino-acid chain: Glutaminase (309 aa).

7 residues coordinate substrate: Ser64, Asn114, Glu160, Asn167, Tyr191, Tyr243, and Val261.

Belongs to the glutaminase family. As to quaternary structure, homotetramer.

The enzyme catalyses L-glutamine + H2O = L-glutamate + NH4(+). This Methylorubrum extorquens (strain PA1) (Methylobacterium extorquens) protein is Glutaminase.